The primary structure comprises 288 residues: Transmembrane protein 163 (288 aa).

The tract at residues 1-64 is disordered; that stretch reads MEPALGSERR…ESGQFSDGLE (64 aa). Residues 1-87 are Cytoplasmic-facing; that stretch reads MEPALGSERR…HEAQNYRKKA (87 aa). A Phosphoserine modification is found at serine 11. Residues 12-24 show a composition bias toward pro residues; the sequence is PPGPGVPRPPPRG. Over residues 25 to 42 the composition is skewed to low complexity; the sequence is HAPSTAAPAPSPAPMSSS. Positions 41 to 71 are required for interaction with MCOLN1; it reads SSVQSDEERQPRISESGQFSDGLEDRGLLES. 4 positions are modified to phosphoserine: serine 45, serine 54, serine 56, and serine 60. Residues 88–108 traverse the membrane as a helical segment; it reads LWVSWLSIIVTLALAVAAFTV. The Extracellular portion of the chain corresponds to 109–115; it reads SVMRYSA. The chain crosses the membrane as a helical span at residues 116 to 136; that stretch reads SAFGFAFDAILDVLSSAIVLW. The Cytoplasmic portion of the chain corresponds to 137–149; it reads RYSNAAAVHSANR. Residues 150 to 170 traverse the membrane as a helical segment; sequence EYIACVILGVIFLLSSICIVV. Residues 171–186 are Extracellular-facing; it reads KAIHDLSTRLLPEVDD. Residues 187–207 traverse the membrane as a helical segment; the sequence is FLFSVSILSGILCSVLAVLKF. Over 208 to 216 the chain is Cytoplasmic; that stretch reads MLGKVLTSR. The helical transmembrane segment at 217 to 237 threads the bilayer; the sequence is ALITDGFNSLVGGVMGFSILL. Topologically, residues 238 to 254 are extracellular; that stretch reads SAEVFKHNAAVWYLDGS. A helical membrane pass occupies residues 255–275; it reads IGVLIGLTIFAYGVKLLIDMV. Topologically, residues 276-288 are cytoplasmic; sequence PRVRQTRHYEMFE.

Belongs to the TMEM163 family. In terms of assembly, homodimer. Interacts with MCOLN1. Interacts with SLC30A1, SLC30A2, SLC30A3 and SLC30A4. In terms of tissue distribution, widely expressed, with high expression in the brain, cerebellum, heart, lung and spleen. In the brain, mainly expressed in the glutaminergic neuron subpopulations.

The protein resides in the cytoplasmic vesicle. It localises to the secretory vesicle. It is found in the synaptic vesicle membrane. The protein localises to the early endosome membrane. Its subcellular location is the late endosome membrane. The protein resides in the lysosome membrane. It localises to the cell membrane. It catalyses the reaction Zn(2+)(in) = Zn(2+)(out). Functionally, zinc ion transporter that mediates zinc efflux and plays a crucial role in intracellular zinc homeostasis. Binds the divalent cations Zn(2+), Ni(2+), and to a minor extent Cu(2+). Is a functional modulator of P2X purinoceptors, including P2RX1, P2RX3, P2RX4 and P2RX7. Plays a role in central nervous system development and is required for myelination, and survival and proliferation of oligodendrocytes. This is Transmembrane protein 163 (Tmem163) from Mus musculus (Mouse).